Here is a 294-residue protein sequence, read N- to C-terminus: uncharacterized protein (294 aa).

Belongs to the glycosyltransferase 2 family. WaaE/KdtX subfamily.

This is an uncharacterized protein from Rickettsia bellii (strain RML369-C).